The chain runs to 152 residues: Small ribosomal subunit protein uS13 (152 aa).

It belongs to the universal ribosomal protein uS13 family. Component of the small ribosomal subunit.

The protein localises to the cytoplasm. Its function is as follows. Component of the small ribosomal subunit. The ribosome is a large ribonucleoprotein complex responsible for the synthesis of proteins in the cell. Plays an essential role in early embryonic development. This is Small ribosomal subunit protein uS13 (rps18) from Danio rerio (Zebrafish).